The following is a 269-amino-acid chain: Eukaryotic translation initiation factor 3 subunit G-1 (269 aa).

Positions 188-266 constitute an RRM domain; the sequence is AAIRISNLSE…LILSVEWSKP (79 aa).

Belongs to the eIF-3 subunit G family. Component of the eukaryotic translation initiation factor 3 (eIF-3) complex. The eIF-3 complex interacts with pix.

The protein localises to the cytoplasm. RNA-binding component of the eukaryotic translation initiation factor 3 (eIF-3) complex, which is involved in protein synthesis of a specialized repertoire of mRNAs and, together with other initiation factors, stimulates binding of mRNA and methionyl-tRNAi to the 40S ribosome. The eIF-3 complex specifically targets and initiates translation of a subset of mRNAs involved in cell proliferation. This subunit can bind 18S rRNA. In Drosophila virilis (Fruit fly), this protein is Eukaryotic translation initiation factor 3 subunit G-1.